The sequence spans 193 residues: BH3-interacting domain death agonist (193 aa).

Positions 87–101 (IAAQLAEIGDQLDKQ) match the BH3 motif.

Forms heterodimers either with the pro-apoptotic protein BAX or the anti-apoptotic protein Bcl-2.

It is found in the cytoplasm. The protein localises to the mitochondrion outer membrane. Induces caspases and apoptosis. Counters the protective effect of Bcl-2. This is BH3-interacting domain death agonist (BID) from Gallus gallus (Chicken).